The chain runs to 152 residues: UPF0225 protein YchJ (152 aa).

It belongs to the UPF0225 family.

The polypeptide is UPF0225 protein YchJ (Escherichia coli O6:K15:H31 (strain 536 / UPEC)).